A 304-amino-acid chain; its full sequence is UDP-N-acetylenolpyruvoylglucosamine reductase (304 aa).

The FAD-binding PCMH-type domain maps to 31–196 (KVGGPADYLA…ISAKFNLKPG (166 aa)). Arginine 175 is an active-site residue. Serine 225 acts as the Proton donor in catalysis. The active site involves glutamate 295.

The protein belongs to the MurB family. The cofactor is FAD.

The protein localises to the cytoplasm. The enzyme catalyses UDP-N-acetyl-alpha-D-muramate + NADP(+) = UDP-N-acetyl-3-O-(1-carboxyvinyl)-alpha-D-glucosamine + NADPH + H(+). It participates in cell wall biogenesis; peptidoglycan biosynthesis. Cell wall formation. The polypeptide is UDP-N-acetylenolpyruvoylglucosamine reductase (Streptococcus thermophilus (strain ATCC BAA-491 / LMD-9)).